A 150-amino-acid polypeptide reads, in one-letter code: Troponin C, isotype gamma (150 aa).

At Met-1 the chain carries N-acetylmethionine. 4 consecutive EF-hand domains span residues 7–42 (EQLS…MGVK), 43–78 (ISEK…FLIE), 83–118 (ALKA…LDNR), and 119–150 (LTED…MMSG). Ca(2+) contacts are provided by Asp-56, Asp-58, Ser-60, Glu-62, and Glu-67. The Ca(2+) site is built by Asp-132, Asp-134, Ser-136, Thr-138, and Glu-143.

The protein belongs to the troponin C family.

Its function is as follows. Troponin is the central regulatory protein of striated muscle contraction. Tn consists of three components: Tn-I which is the inhibitor of actomyosin ATPase, Tn-T which contains the binding site for tropomyosin and Tn-C. The binding of calcium to Tn-C abolishes the inhibitory action of Tn on actin filaments. The polypeptide is Troponin C, isotype gamma (Astacus leptodactylus (Turkish narrow-clawed crayfish)).